We begin with the raw amino-acid sequence, 388 residues long: Succinate--CoA ligase [ADP-forming] subunit beta (388 aa).

Residues Lys-46, 53-55 (GRG), Glu-99, Cys-102, and Glu-107 contribute to the ATP site. Mg(2+) is bound by residues Asn-199 and Asp-213. Substrate-binding positions include Asn-264 and 321-323 (GIV).

The protein belongs to the succinate/malate CoA ligase beta subunit family. As to quaternary structure, heterotetramer of two alpha and two beta subunits. The cofactor is Mg(2+).

It catalyses the reaction succinate + ATP + CoA = succinyl-CoA + ADP + phosphate. The catalysed reaction is GTP + succinate + CoA = succinyl-CoA + GDP + phosphate. It participates in carbohydrate metabolism; tricarboxylic acid cycle; succinate from succinyl-CoA (ligase route): step 1/1. In terms of biological role, succinyl-CoA synthetase functions in the citric acid cycle (TCA), coupling the hydrolysis of succinyl-CoA to the synthesis of either ATP or GTP and thus represents the only step of substrate-level phosphorylation in the TCA. The beta subunit provides nucleotide specificity of the enzyme and binds the substrate succinate, while the binding sites for coenzyme A and phosphate are found in the alpha subunit. This chain is Succinate--CoA ligase [ADP-forming] subunit beta, found in Actinobacillus pleuropneumoniae serotype 3 (strain JL03).